The sequence spans 37 residues: Large ribosomal subunit protein bL36B (37 aa).

This sequence belongs to the bacterial ribosomal protein bL36 family.

This chain is Large ribosomal subunit protein bL36B, found in Kineococcus radiotolerans (strain ATCC BAA-149 / DSM 14245 / SRS30216).